We begin with the raw amino-acid sequence, 552 residues long: Hydroxylamine reductase (552 aa).

4 residues coordinate [2Fe-2S] cluster: Cys-5, Cys-8, Cys-20, and Cys-27. Hybrid [4Fe-2O-2S] cluster is bound by residues His-251, Glu-275, Cys-319, Cys-407, Cys-435, Cys-460, Glu-494, and Lys-496. Cys-407 bears the Cysteine persulfide mark.

The protein belongs to the HCP family. Requires [2Fe-2S] cluster as cofactor. The cofactor is hybrid [4Fe-2O-2S] cluster.

The protein localises to the cytoplasm. The catalysed reaction is A + NH4(+) + H2O = hydroxylamine + AH2 + H(+). Functionally, catalyzes the reduction of hydroxylamine to form NH(3) and H(2)O. This is Hydroxylamine reductase from Escherichia coli (strain UTI89 / UPEC).